Consider the following 171-residue polypeptide: Small ribosomal subunit protein uS4 (171 aa).

One can recognise an S4 RNA-binding domain in the interval 103–167 (RRLQTLVHKR…SPMKKQIEAA (65 aa)).

The protein belongs to the universal ribosomal protein uS4 family. In terms of assembly, part of the 30S ribosomal subunit. Contacts protein S5. The interaction surface between S4 and S5 is involved in control of translational fidelity.

Its function is as follows. One of the primary rRNA binding proteins, it binds directly to 16S rRNA where it nucleates assembly of the body of the 30S subunit. In terms of biological role, with S5 and S12 plays an important role in translational accuracy. The polypeptide is Small ribosomal subunit protein uS4 (Methanothermobacter thermautotrophicus (strain ATCC 29096 / DSM 1053 / JCM 10044 / NBRC 100330 / Delta H) (Methanobacterium thermoautotrophicum)).